Here is a 451-residue protein sequence, read N- to C-terminus: Glucose-6-phosphate isomerase (451 aa).

Glutamate 291 serves as the catalytic Proton donor. Residues histidine 312 and lysine 426 contribute to the active site.

It belongs to the GPI family.

It localises to the cytoplasm. It carries out the reaction alpha-D-glucose 6-phosphate = beta-D-fructose 6-phosphate. It functions in the pathway carbohydrate biosynthesis; gluconeogenesis. The protein operates within carbohydrate degradation; glycolysis; D-glyceraldehyde 3-phosphate and glycerone phosphate from D-glucose: step 2/4. Catalyzes the reversible isomerization of glucose-6-phosphate to fructose-6-phosphate. The protein is Glucose-6-phosphate isomerase of Thermoanaerobacter sp. (strain X514).